A 182-amino-acid chain; its full sequence is Methyl-coenzyme M reductase operon protein C (182 aa).

As to quaternary structure, MCR is composed of three subunits: alpha, beta, and gamma. The function of proteins C and D is not known.

The sequence is that of Methyl-coenzyme M reductase operon protein C (mcrC) from Methanococcus voltae.